Consider the following 360-residue polypeptide: Phospho-N-acetylmuramoyl-pentapeptide-transferase (360 aa).

A run of 10 helical transmembrane segments spans residues 27 to 47, 69 to 89, 93 to 113, 134 to 154, 168 to 188, 199 to 219, 239 to 259, 262 to 282, 288 to 308, and 337 to 357; these read GAFLTALIFGFVFGKPLINVL, VGTPTMGGLLIVGALLFSTLM, WDNPFVWLVLFVTMSFGLIGF, LLLGFVIAIVAALWASWNHPA, VLLNLGYLYVPFCICVIVGAA, GLAIMPVMIAAGTLGIIAYAV, ILIFTSALFGGGLGFLWYNAP, AVFMGDTGSLALGGALGAIAI, LVLAIVGGLFVVEALSVIIQV, and TIVIRFWIISLILAMIGLATL.

It belongs to the glycosyltransferase 4 family. MraY subfamily. Requires Mg(2+) as cofactor.

The protein resides in the cell inner membrane. It catalyses the reaction UDP-N-acetyl-alpha-D-muramoyl-L-alanyl-gamma-D-glutamyl-meso-2,6-diaminopimeloyl-D-alanyl-D-alanine + di-trans,octa-cis-undecaprenyl phosphate = di-trans,octa-cis-undecaprenyl diphospho-N-acetyl-alpha-D-muramoyl-L-alanyl-D-glutamyl-meso-2,6-diaminopimeloyl-D-alanyl-D-alanine + UMP. The protein operates within cell wall biogenesis; peptidoglycan biosynthesis. Its function is as follows. Catalyzes the initial step of the lipid cycle reactions in the biosynthesis of the cell wall peptidoglycan: transfers peptidoglycan precursor phospho-MurNAc-pentapeptide from UDP-MurNAc-pentapeptide onto the lipid carrier undecaprenyl phosphate, yielding undecaprenyl-pyrophosphoryl-MurNAc-pentapeptide, known as lipid I. The protein is Phospho-N-acetylmuramoyl-pentapeptide-transferase of Ruegeria sp. (strain TM1040) (Silicibacter sp.).